The following is a 1154-amino-acid chain: DNA-directed RNA polymerase subunit beta' (1154 aa).

The Zn(2+) site is built by C60, C62, C75, and C78. Residues D449, D451, and D453 each contribute to the Mg(2+) site. Residues C774, C848, C855, and C858 each contribute to the Zn(2+) site.

It belongs to the RNA polymerase beta' chain family. As to quaternary structure, the RNAP catalytic core consists of 2 alpha, 1 beta, 1 beta' and 1 omega subunit. When a sigma factor is associated with the core the holoenzyme is formed, which can initiate transcription. The cofactor is Mg(2+). It depends on Zn(2+) as a cofactor.

It catalyses the reaction RNA(n) + a ribonucleoside 5'-triphosphate = RNA(n+1) + diphosphate. In terms of biological role, DNA-dependent RNA polymerase catalyzes the transcription of DNA into RNA using the four ribonucleoside triphosphates as substrates. This Desulforudis audaxviator (strain MP104C) protein is DNA-directed RNA polymerase subunit beta'.